We begin with the raw amino-acid sequence, 252 residues long: Imidazole glycerol phosphate synthase subunit HisF (252 aa).

Residues D11 and D130 contribute to the active site.

The protein belongs to the HisA/HisF family. Heterodimer of HisH and HisF.

The protein resides in the cytoplasm. It catalyses the reaction 5-[(5-phospho-1-deoxy-D-ribulos-1-ylimino)methylamino]-1-(5-phospho-beta-D-ribosyl)imidazole-4-carboxamide + L-glutamine = D-erythro-1-(imidazol-4-yl)glycerol 3-phosphate + 5-amino-1-(5-phospho-beta-D-ribosyl)imidazole-4-carboxamide + L-glutamate + H(+). The protein operates within amino-acid biosynthesis; L-histidine biosynthesis; L-histidine from 5-phospho-alpha-D-ribose 1-diphosphate: step 5/9. IGPS catalyzes the conversion of PRFAR and glutamine to IGP, AICAR and glutamate. The HisF subunit catalyzes the cyclization activity that produces IGP and AICAR from PRFAR using the ammonia provided by the HisH subunit. The sequence is that of Imidazole glycerol phosphate synthase subunit HisF from Moorella thermoacetica (strain ATCC 39073 / JCM 9320).